A 369-amino-acid chain; its full sequence is Histidinol-phosphate aminotransferase (369 aa).

Lys-223 bears the N6-(pyridoxal phosphate)lysine mark.

The protein belongs to the class-II pyridoxal-phosphate-dependent aminotransferase family. Histidinol-phosphate aminotransferase subfamily. Homodimer. Requires pyridoxal 5'-phosphate as cofactor.

The enzyme catalyses L-histidinol phosphate + 2-oxoglutarate = 3-(imidazol-4-yl)-2-oxopropyl phosphate + L-glutamate. It participates in amino-acid biosynthesis; L-histidine biosynthesis; L-histidine from 5-phospho-alpha-D-ribose 1-diphosphate: step 7/9. Functionally, catalyzes the conversion of imidazole acetol phosphate to histidinol phosphate. Can also transaminate aromatic amino acids and histidine in addition to histidinol phosphate. This is Histidinol-phosphate aminotransferase from Zymomonas mobilis subsp. mobilis (strain ATCC 31821 / ZM4 / CP4).